A 556-amino-acid chain; its full sequence is Glutamine--tRNA ligase (556 aa).

The short motif at proline 39–histidine 49 is the 'HIGH' region element. ATP-binding positions include glutamate 40–asparagine 42 and histidine 46–serine 52. Residues aspartate 72 and tyrosine 217 each coordinate L-glutamine. ATP contacts are provided by residues threonine 236 and arginine 267–leucine 268. Positions leucine 274 to arginine 278 match the 'KMSKS' region motif.

It belongs to the class-I aminoacyl-tRNA synthetase family. Monomer.

The protein resides in the cytoplasm. The enzyme catalyses tRNA(Gln) + L-glutamine + ATP = L-glutaminyl-tRNA(Gln) + AMP + diphosphate. This chain is Glutamine--tRNA ligase, found in Haemophilus ducreyi (strain 35000HP / ATCC 700724).